Here is a 314-residue protein sequence, read N- to C-terminus: Probable manganese-dependent inorganic pyrophosphatase (314 aa).

Mn(2+) contacts are provided by His-7, Asp-11, Asp-13, Asp-72, His-94, and Asp-146.

The protein belongs to the PPase class C family. Mn(2+) is required as a cofactor.

It is found in the cytoplasm. The enzyme catalyses diphosphate + H2O = 2 phosphate + H(+). The chain is Probable manganese-dependent inorganic pyrophosphatase (ppaC) from Deinococcus radiodurans (strain ATCC 13939 / DSM 20539 / JCM 16871 / CCUG 27074 / LMG 4051 / NBRC 15346 / NCIMB 9279 / VKM B-1422 / R1).